A 479-amino-acid polypeptide reads, in one-letter code: Bifunctional aspartate aminotransferase and glutamate/aspartate-prephenate aminotransferase (479 aa).

Residues 1–79 constitute a chloroplast transit peptide; sequence MAATTTTSSS…VEVDISLSPR (79 aa). An L-aspartate-binding site is contributed by G111. Pyridoxal 5'-phosphate is bound at residue 172 to 173; sequence AK. W197 and N247 together coordinate L-aspartate. Pyridoxal 5'-phosphate-binding positions include N247, Y279, and 307 to 309; that span reads GFS. K310 carries the N6-(pyridoxal phosphate)lysine modification. Position 318 (R318) interacts with pyridoxal 5'-phosphate. R449 lines the L-aspartate pocket.

This sequence belongs to the class-I pyridoxal-phosphate-dependent aminotransferase family. In terms of assembly, homodimer. It depends on pyridoxal 5'-phosphate as a cofactor. In terms of tissue distribution, expressed in flowers, pistils, stamens, ovaries and at lower levels in leaves and sepals.

The protein localises to the plastid. Its subcellular location is the chloroplast. It catalyses the reaction L-aspartate + 2-oxoglutarate = oxaloacetate + L-glutamate. The enzyme catalyses L-arogenate + oxaloacetate = prephenate + L-aspartate. It carries out the reaction L-arogenate + 2-oxoglutarate = prephenate + L-glutamate. The protein operates within amino-acid biosynthesis; L-phenylalanine biosynthesis; L-arogenate from prephenate (L-Asp route): step 1/1. It participates in amino-acid biosynthesis; L-phenylalanine biosynthesis; L-arogenate from prephenate (L-Glu route): step 1/1. Prokaryotic-type aspartate aminotransferase. Also has a prenate transaminase activity. Involved in the aromatic amino acids biosynthesis pathway via the arogenate route. Required for the transamination of prephenate into arogenate. Can use 2-oxoglutarate, oxaloacetate and prephenate as substrates, but not phenylpyruvate or 4-hydroxyphenylpyruvate. This is Bifunctional aspartate aminotransferase and glutamate/aspartate-prephenate aminotransferase from Petunia hybrida (Petunia).